The sequence spans 203 residues: Small ribosomal subunit protein uS4 (203 aa).

An S4 RNA-binding domain is found at 93–156 (RRLDNVVYRL…MKVPAILEAV (64 aa)).

Belongs to the universal ribosomal protein uS4 family. In terms of assembly, part of the 30S ribosomal subunit. Contacts protein S5. The interaction surface between S4 and S5 is involved in control of translational fidelity.

In terms of biological role, one of the primary rRNA binding proteins, it binds directly to 16S rRNA where it nucleates assembly of the body of the 30S subunit. Its function is as follows. With S5 and S12 plays an important role in translational accuracy. This chain is Small ribosomal subunit protein uS4, found in Streptococcus uberis (strain ATCC BAA-854 / 0140J).